Consider the following 204-residue polypeptide: ATP-dependent Clp protease proteolytic subunit 1 (204 aa).

The Nucleophile role is filled by S97. H122 is a catalytic residue.

This sequence belongs to the peptidase S14 family. In terms of assembly, fourteen ClpP subunits assemble into 2 heptameric rings which stack back to back to give a disk-like structure with a central cavity, resembling the structure of eukaryotic proteasomes.

It is found in the cytoplasm. The enzyme catalyses Hydrolysis of proteins to small peptides in the presence of ATP and magnesium. alpha-casein is the usual test substrate. In the absence of ATP, only oligopeptides shorter than five residues are hydrolyzed (such as succinyl-Leu-Tyr-|-NHMec, and Leu-Tyr-Leu-|-Tyr-Trp, in which cleavage of the -Tyr-|-Leu- and -Tyr-|-Trp bonds also occurs).. Functionally, cleaves peptides in various proteins in a process that requires ATP hydrolysis. Has a chymotrypsin-like activity. Plays a major role in the degradation of misfolded proteins. The sequence is that of ATP-dependent Clp protease proteolytic subunit 1 from Nostoc sp. (strain PCC 7120 / SAG 25.82 / UTEX 2576).